Here is a 363-residue protein sequence, read N- to C-terminus: GDP-fucose transporter 1 (363 aa).

A run of 8 helical transmembrane segments spans residues 33 to 55, 75 to 97, 110 to 129, 139 to 161, 166 to 184, 194 to 213, 226 to 248, and 263 to 285; these read FLLRALQIALVVSLYWVTSISMV, VTFYQCLVTSLLCKGLSTLATCC, LKVARSVLPLSVVFIGMITF, VPFYNVGRSLTTVFNVLLSYLLL, SFYALLTCGVIIGGFWLGI, SLTGTIFGVLASLCVSLNAI, IWRLTFYNNVNACVLFLPLMIVL, and AHFWLMMTLGGLFGFAIGYVTGL.

This sequence belongs to the TPT transporter family. SLC35C subfamily.

It is found in the golgi apparatus membrane. It carries out the reaction GMP(out) + GDP-beta-L-fucose(in) = GMP(in) + GDP-beta-L-fucose(out). In terms of biological role, antiporter specific for GDP-l-fucose and depending on the concomitant reverse transport of GMP. Involved in GDP-fucose import from the cytoplasm into the Golgi lumen. The chain is GDP-fucose transporter 1 (Slc35c1) from Mus musculus (Mouse).